A 303-amino-acid chain; its full sequence is Leukocyte immunoglobulin-like receptor subfamily B member 4B (303 aa).

An N-terminal signal peptide occupies residues 1-23 (MIAMLTVLLYLALILEPRTAVQA). Residues 24–238 (GHLPKPIIWA…TEDGLETYQK (215 aa)) lie on the Extracellular side of the membrane. Ig-like C2-type domains follow at residues 42 to 123 (YTSV…AYEN) and 124 to 212 (PSLS…KPSN). Cysteines 49 and 98 form a disulfide. N-linked (GlcNAc...) asparagine glycosylation is found at Asn-79, Asn-133, and Asn-191. A disulfide bridge connects residues Cys-144 and Cys-196. A helical transmembrane segment spans residues 239 to 260 (ILIGVLVSFLLLFFLLLFLILI). The Cytoplasmic portion of the chain corresponds to 261–303 (GYQCRHKNKANASVKNTQSEDNAELNSWNPQNEDPPRELCTPR). Over residues 275–292 (KNTQSEDNAELNSWNPQN) the composition is skewed to polar residues. Residues 275–303 (KNTQSEDNAELNSWNPQNEDPPRELCTPR) form a disordered region.

Monomer and homodimer. As to expression, expressed on mast cells (at protein level). Also expressed at much lower levels on natural killer cells (at protein level).

It is found in the cell membrane. In terms of biological role, plays a role in mast cell activation. The sequence is that of Leukocyte immunoglobulin-like receptor subfamily B member 4B from Mus musculus (Mouse).